Here is a 666-residue protein sequence, read N- to C-terminus: Amyloid beta A4 precursor protein-binding family B member 1-interacting protein (666 aa).

Serine 55 is subject to Phosphoserine. A disordered region spans residues 122-155 (SQYEDDLPPPPADPVLDLPLPPPPPEPLSQEEEE). The span at 129–148 (PPPPADPVLDLPLPPPPPEP) shows a compositional bias: pro residues. A Ras-associating domain is found at 176-263 (KKLVVKVHMN…KILFLEKEEK (88 aa)). The region spanning 310 to 419 (VPELEGALYL…WVMGIRIAKY (110 aa)) is the PH domain. The disordered stretch occupies residues 448 to 666 (AAAPAQPSTG…ALQKKRGNVS (219 aa)). Over residues 453–478 (QPSTGPKTGTTQPNGQIPQATHSVSA) the composition is skewed to polar residues. Positions 483 to 504 (AQRHAETSKDKKPALGNHHDPA) are enriched in basic and acidic residues. A Phosphoserine modification is found at serine 526. At threonine 528 the chain carries Phosphothreonine. A Phosphoserine modification is found at serine 531. Pro residues-rich tracts occupy residues 547 to 589 (PAPP…PPPS) and 598 to 631 (LPPPPPPPPAPAPAPVPDSARPPPAVAKRPPVPP).

The protein belongs to the MRL family. In terms of assembly, interacts, through the N-terminal Pro-rich region, with the WW domain of APBB1. Interacts with RAP1A, PFN1, TLN1, VASP, VCL and ENAH. As to expression, widely expressed with high expression in thymus, spleen, lymph node, bone marrow and peripheral leukocytes.

Its subcellular location is the cell membrane. The protein localises to the cell projection. The protein resides in the lamellipodium. It is found in the cell junction. It localises to the focal adhesion. Its subcellular location is the cytoplasm. The protein localises to the cytoskeleton. Functionally, appears to function in the signal transduction from Ras activation to actin cytoskeletal remodeling. Suppresses insulin-induced promoter activities through AP1 and SRE. Mediates Rap1-induced adhesion. In Homo sapiens (Human), this protein is Amyloid beta A4 precursor protein-binding family B member 1-interacting protein (APBB1IP).